The following is a 23-amino-acid chain: Basic phospholipase A2 mangshantoxin (23 aa).

Belongs to the phospholipase A2 family. Group II subfamily. It depends on Ca(2+) as a cofactor. Post-translationally, contains 7 disulfide bonds. As to expression, expressed by the venom gland.

It is found in the secreted. The catalysed reaction is a 1,2-diacyl-sn-glycero-3-phosphocholine + H2O = a 1-acyl-sn-glycero-3-phosphocholine + a fatty acid + H(+). In terms of biological role, snake venom phospholipase A2 (PLA2) that displays presynaptic neurotoxicity. PLA2 catalyzes the calcium-dependent hydrolysis of the 2-acyl groups in 3-sn-phosphoglycerides. This is Basic phospholipase A2 mangshantoxin from Protobothrops mangshanensis (Mangshan pitviper).